The sequence spans 278 residues: S-formylglutathione hydrolase YeiG (278 aa).

Residues S145, D223, and H256 each act as charge relay system in the active site.

It belongs to the esterase D family.

The catalysed reaction is S-formylglutathione + H2O = formate + glutathione + H(+). Serine hydrolase involved in the detoxification of formaldehyde. Hydrolyzes S-formylglutathione to glutathione and formate. The protein is S-formylglutathione hydrolase YeiG (yeiG) of Escherichia coli (strain UTI89 / UPEC).